The following is a 365-amino-acid chain: Large ribosomal subunit protein uL3 (365 aa).

The segment at 343–365 (RPPKKKPPVQRPQITYVSVESKQ) is disordered. Polar residues predominate over residues 354–365 (PQITYVSVESKQ).

This sequence belongs to the universal ribosomal protein uL3 family. Part of the 50S ribosomal subunit. Forms a cluster with proteins L14 and L24e.

Its function is as follows. One of the primary rRNA binding proteins, it binds directly near the 3'-end of the 23S rRNA, where it nucleates assembly of the 50S subunit. This chain is Large ribosomal subunit protein uL3, found in Pyrococcus furiosus (strain ATCC 43587 / DSM 3638 / JCM 8422 / Vc1).